Consider the following 314-residue polypeptide: DNA-directed RNA polymerase subunit alpha (314 aa).

Residues 1–228 (MIEIEKPKIE…EHLNIFVGLT (228 aa)) form an alpha N-terminal domain (alpha-NTD) region. Residues 245–314 (KEKVLEMTIE…ELGLSLRKDD (70 aa)) are alpha C-terminal domain (alpha-CTD).

The protein belongs to the RNA polymerase alpha chain family. In terms of assembly, homodimer. The RNAP catalytic core consists of 2 alpha, 1 beta, 1 beta' and 1 omega subunit. When a sigma factor is associated with the core the holoenzyme is formed, which can initiate transcription.

The enzyme catalyses RNA(n) + a ribonucleoside 5'-triphosphate = RNA(n+1) + diphosphate. Its function is as follows. DNA-dependent RNA polymerase catalyzes the transcription of DNA into RNA using the four ribonucleoside triphosphates as substrates. In Geobacillus kaustophilus (strain HTA426), this protein is DNA-directed RNA polymerase subunit alpha.